The following is a 100-amino-acid chain: Urease subunit gamma (100 aa).

Belongs to the urease gamma subunit family. As to quaternary structure, heterotrimer of UreA (gamma), UreB (beta) and UreC (alpha) subunits. Three heterotrimers associate to form the active enzyme.

It is found in the cytoplasm. The enzyme catalyses urea + 2 H2O + H(+) = hydrogencarbonate + 2 NH4(+). Its pathway is nitrogen metabolism; urea degradation; CO(2) and NH(3) from urea (urease route): step 1/1. In Azotobacter vinelandii (strain DJ / ATCC BAA-1303), this protein is Urease subunit gamma.